Reading from the N-terminus, the 389-residue chain is Lipid-A-disaccharide synthase (389 aa).

Belongs to the LpxB family.

It catalyses the reaction a lipid X + a UDP-2-N,3-O-bis[(3R)-3-hydroxyacyl]-alpha-D-glucosamine = a lipid A disaccharide + UDP + H(+). It participates in bacterial outer membrane biogenesis; LPS lipid A biosynthesis. In terms of biological role, condensation of UDP-2,3-diacylglucosamine and 2,3-diacylglucosamine-1-phosphate to form lipid A disaccharide, a precursor of lipid A, a phosphorylated glycolipid that anchors the lipopolysaccharide to the outer membrane of the cell. The polypeptide is Lipid-A-disaccharide synthase (Paraburkholderia xenovorans (strain LB400)).